Consider the following 353-residue polypeptide: Protein RecA (353 aa).

Position 68 to 75 (68 to 75 (GPESSGKT)) interacts with ATP.

The protein belongs to the RecA family.

Its subcellular location is the cytoplasm. Can catalyze the hydrolysis of ATP in the presence of single-stranded DNA, the ATP-dependent uptake of single-stranded DNA by duplex DNA, and the ATP-dependent hybridization of homologous single-stranded DNAs. It interacts with LexA causing its activation and leading to its autocatalytic cleavage. This chain is Protein RecA, found in Roseiflexus castenholzii (strain DSM 13941 / HLO8).